The following is a 132-amino-acid chain: Small ribosomal subunit protein uS8 (132 aa).

This sequence belongs to the universal ribosomal protein uS8 family. As to quaternary structure, part of the 30S ribosomal subunit. Contacts proteins S5 and S12.

Its function is as follows. One of the primary rRNA binding proteins, it binds directly to 16S rRNA central domain where it helps coordinate assembly of the platform of the 30S subunit. The chain is Small ribosomal subunit protein uS8 from Geobacter metallireducens (strain ATCC 53774 / DSM 7210 / GS-15).